A 176-amino-acid chain; its full sequence is Probable fimbrial subunit LpfE (176 aa).

The signal sequence occupies residues 1 to 23; it reads MKFKRLLHSGIASLSLVACGVNA.

Belongs to the fimbrial protein family.

It localises to the fimbrium. Part of the lpfABCC'DE fimbrial operon. LP fimbriae may participate in the interaction with eukaryotic cells by assisting in microcolony formation. The polypeptide is Probable fimbrial subunit LpfE (lpfE) (Escherichia coli O157:H7).